The following is a 293-amino-acid chain: 4-diphosphocytidyl-2-C-methyl-D-erythritol kinase (293 aa).

K23 is a catalytic residue. 109–119 (PVAAGIGGGSA) lines the ATP pocket. The active site involves D151.

The protein belongs to the GHMP kinase family. IspE subfamily.

The enzyme catalyses 4-CDP-2-C-methyl-D-erythritol + ATP = 4-CDP-2-C-methyl-D-erythritol 2-phosphate + ADP + H(+). The protein operates within isoprenoid biosynthesis; isopentenyl diphosphate biosynthesis via DXP pathway; isopentenyl diphosphate from 1-deoxy-D-xylulose 5-phosphate: step 3/6. Its function is as follows. Catalyzes the phosphorylation of the position 2 hydroxy group of 4-diphosphocytidyl-2C-methyl-D-erythritol. The chain is 4-diphosphocytidyl-2-C-methyl-D-erythritol kinase from Rhizorhabdus wittichii (strain DSM 6014 / CCUG 31198 / JCM 15750 / NBRC 105917 / EY 4224 / RW1) (Sphingomonas wittichii).